Reading from the N-terminus, the 430-residue chain is MTEIVAVRGREILDSRGNPTLEVEVVTAAGFVGRAAVPSGASTGQNEAVELRDGEGGRYGGKGVLRAVANVEGELAEAVVGMDVTDQRALDLAMIEADGTENKGRLGANAMLGVSLAAARAAAEYAGLPLYRYLGGPGAHVLPVPCANILNGGAHAANNVDFQEFMVVPVGFESYREALRAVAEIYAALKKLLAERGLAGGIGDEGGFAPDLSSNGEALGLLSEAVERSGYSLGEQVCFALDPAASEFYEGGRYELSGEGRSLERGEMVDYYVRLCGEYPIISIEDGLAEDDWEGWEMISARLGGRVQLVGDDLFVTNPKILRKGIERGIANSILVKVNQIGTLTETFETMDLAHKSGYTAMVSHRSGETDDTTIADLAVAVNAGQIKTGAPARGERVAKYNQLLRIEESLGEAAVYPGLGAFNPRMREG.

(2R)-2-phosphoglycerate is bound at residue Q163. The active-site Proton donor is E205. Mg(2+)-binding residues include D242, E285, and D312. (2R)-2-phosphoglycerate-binding residues include K337, R366, S367, and K388. K337 serves as the catalytic Proton acceptor.

This sequence belongs to the enolase family. The cofactor is Mg(2+).

Its subcellular location is the cytoplasm. The protein resides in the secreted. It localises to the cell surface. The catalysed reaction is (2R)-2-phosphoglycerate = phosphoenolpyruvate + H2O. It participates in carbohydrate degradation; glycolysis; pyruvate from D-glyceraldehyde 3-phosphate: step 4/5. Catalyzes the reversible conversion of 2-phosphoglycerate (2-PG) into phosphoenolpyruvate (PEP). It is essential for the degradation of carbohydrates via glycolysis. The protein is Enolase of Rubrobacter xylanophilus (strain DSM 9941 / JCM 11954 / NBRC 16129 / PRD-1).